A 34-amino-acid polypeptide reads, in one-letter code: MEVNILAFIATALFILIPTAFSLILYVQTASQNN.

The helical transmembrane segment at 5-25 (ILAFIATALFILIPTAFSLIL) threads the bilayer.

This sequence belongs to the PsbM family. In terms of assembly, PSII is composed of 1 copy each of membrane proteins PsbA, PsbB, PsbC, PsbD, PsbE, PsbF, PsbH, PsbI, PsbJ, PsbK, PsbL, PsbM, PsbT, PsbX, PsbY, PsbZ, Psb30/Ycf12, at least 3 peripheral proteins of the oxygen-evolving complex and a large number of cofactors. It forms dimeric complexes.

It is found in the plastid. It localises to the chloroplast thylakoid membrane. In terms of biological role, one of the components of the core complex of photosystem II (PSII). PSII is a light-driven water:plastoquinone oxidoreductase that uses light energy to abstract electrons from H(2)O, generating O(2) and a proton gradient subsequently used for ATP formation. It consists of a core antenna complex that captures photons, and an electron transfer chain that converts photonic excitation into a charge separation. This subunit is found at the monomer-monomer interface. The chain is Photosystem II reaction center protein M from Huperzia lucidula (Shining clubmoss).